Reading from the N-terminus, the 513-residue chain is Alpha-1B-glycoprotein (513 aa).

Residues 1-20 form the signal peptide; the sequence is MSLLTTVLLLWGFTLGPGNA. 5 Ig-like V-type domains span residues 22–126, 127–219, 220–312, 313–415, and 416–513; these read WLDS…VTGK, EPLP…MSAT, QLPP…PVEL, MWSD…LRIN, and GPAP…VEGS. Residues asparagine 44, asparagine 89, and asparagine 192 are each glycosylated (N-linked (GlcNAc...) asparagine). Disulfide bonds link cysteine 49/cysteine 96, cysteine 153/cysteine 195, cysteine 245/cysteine 292, cysteine 343/cysteine 392, and cysteine 441/cysteine 488. Residues asparagine 369, asparagine 381, asparagine 389, and asparagine 485 are each glycosylated (N-linked (GlcNAc...) asparagine).

Interacts with CRISP3. As to expression, isoform 1 is expressed in normal liver. Isoform 2 is expressed in the regenerating liver after partial hepatectomy and at very low levels in the normal lung, brain and testis.

It localises to the secreted. This is Alpha-1B-glycoprotein from Rattus norvegicus (Rat).